Consider the following 625-residue polypeptide: tRNA uridine 5-carboxymethylaminomethyl modification enzyme MnmG (625 aa).

Residues 9 to 14 (GGGHAG), Val-121, and Ser-177 each bind FAD. 271–285 (GPRYCPSIEDKVNRF) serves as a coordination point for NAD(+). Residue Gln-368 coordinates FAD.

It belongs to the MnmG family. As to quaternary structure, homodimer. Heterotetramer of two MnmE and two MnmG subunits. FAD serves as cofactor.

It localises to the cytoplasm. Functionally, NAD-binding protein involved in the addition of a carboxymethylaminomethyl (cmnm) group at the wobble position (U34) of certain tRNAs, forming tRNA-cmnm(5)s(2)U34. This chain is tRNA uridine 5-carboxymethylaminomethyl modification enzyme MnmG, found in Aliarcobacter butzleri (strain RM4018) (Arcobacter butzleri).